The primary structure comprises 46 residues: Esculentin-1a/b (46 aa).

Cys-40 and Cys-46 are disulfide-bonded.

It belongs to the frog skin active peptide (FSAP) family. Esculentin subfamily. In terms of tissue distribution, expressed by the skin glands.

The protein localises to the secreted. Its function is as follows. Antimicrobial peptide. Stimulates insulin secretion by BRIN-BD11 cells in vitro. Shows hemolytic activity. The protein is Esculentin-1a/b of Pelophylax ridibundus (Marsh frog).